The chain runs to 153 residues: Xanthine-guanine phosphoribosyltransferase (153 aa).

Residues 37-38 (RG), R69, and 88-96 (DDLVDTGGT) each bind 5-phospho-alpha-D-ribose 1-diphosphate. Residue R69 participates in GMP binding. D89 contacts Mg(2+). Residues D92 and I135 each coordinate guanine. Residues D92 and I135 each contribute to the xanthine site. Residues 92-96 (DTGGT) and 134-135 (WI) each bind GMP.

Belongs to the purine/pyrimidine phosphoribosyltransferase family. XGPT subfamily. In terms of assembly, homotetramer. Mg(2+) is required as a cofactor.

The protein localises to the cell membrane. It catalyses the reaction GMP + diphosphate = guanine + 5-phospho-alpha-D-ribose 1-diphosphate. The catalysed reaction is XMP + diphosphate = xanthine + 5-phospho-alpha-D-ribose 1-diphosphate. The enzyme catalyses IMP + diphosphate = hypoxanthine + 5-phospho-alpha-D-ribose 1-diphosphate. It functions in the pathway purine metabolism; GMP biosynthesis via salvage pathway; GMP from guanine: step 1/1. It participates in purine metabolism; XMP biosynthesis via salvage pathway; XMP from xanthine: step 1/1. Purine salvage pathway enzyme that catalyzes the transfer of the ribosyl-5-phosphate group from 5-phospho-alpha-D-ribose 1-diphosphate (PRPP) to the N9 position of the 6-oxopurines guanine and xanthine to form the corresponding ribonucleotides GMP (guanosine 5'-monophosphate) and XMP (xanthosine 5'-monophosphate), with the release of PPi. To a lesser extent, also acts on hypoxanthine. The chain is Xanthine-guanine phosphoribosyltransferase from Buchnera aphidicola subsp. Baizongia pistaciae (strain Bp).